Here is a 401-residue protein sequence, read N- to C-terminus: Glutamyl-tRNA reductase (401 aa).

Residues 45–48 (TCNR), serine 101, 106–108 (EDQ), and glutamine 112 contribute to the substrate site. The active-site Nucleophile is cysteine 46. 177–182 (GYGDVG) is an NADP(+) binding site.

This sequence belongs to the glutamyl-tRNA reductase family. Homodimer.

The enzyme catalyses (S)-4-amino-5-oxopentanoate + tRNA(Glu) + NADP(+) = L-glutamyl-tRNA(Glu) + NADPH + H(+). It functions in the pathway porphyrin-containing compound metabolism; protoporphyrin-IX biosynthesis; 5-aminolevulinate from L-glutamyl-tRNA(Glu): step 1/2. Functionally, catalyzes the NADPH-dependent reduction of glutamyl-tRNA(Glu) to glutamate 1-semialdehyde (GSA). In Clostridium botulinum (strain Alaska E43 / Type E3), this protein is Glutamyl-tRNA reductase.